Reading from the N-terminus, the 937-residue chain is Beta-mannosidase A (937 aa).

A signal peptide spans 1–23; the sequence is MRALPTTATTLLGVLFFPSASRS. Residues asparagine 42, asparagine 82, asparagine 250, asparagine 285, asparagine 319, asparagine 329, and asparagine 350 are each glycosylated (N-linked (GlcNAc...) asparagine). The active-site Proton donor is the glutamate 482. N-linked (GlcNAc...) asparagine glycosylation is found at asparagine 553, asparagine 612, asparagine 743, and asparagine 796.

This sequence belongs to the glycosyl hydrolase 2 family. Beta-mannosidase A subfamily. As to quaternary structure, homodimer. Post-translationally, N-glycosylated.

Its subcellular location is the secreted. The enzyme catalyses Hydrolysis of terminal, non-reducing beta-D-mannose residues in beta-D-mannosides.. It functions in the pathway glycan metabolism; N-glycan degradation. Its function is as follows. Exoglycosidase that cleaves the single beta-linked mannose residue from the non-reducing end of beta-mannosidic oligosaccharides of various complexity and length. Involved in the degradation of polymeric mannan and galactomannan. Releases the terminal mannose residue from mannotriose and is somewaht less active on other mannooligosaccharides. In Aspergillus aculeatus, this protein is Beta-mannosidase A (mndA).